The chain runs to 94 residues: Large ribosomal subunit protein bL25 (94 aa).

This sequence belongs to the bacterial ribosomal protein bL25 family. Part of the 50S ribosomal subunit; part of the 5S rRNA/L5/L18/L25 subcomplex. Contacts the 5S rRNA. Binds to the 5S rRNA independently of L5 and L18.

Functionally, this is one of the proteins that binds to the 5S RNA in the ribosome where it forms part of the central protuberance. The chain is Large ribosomal subunit protein bL25 from Escherichia coli O157:H7.